Here is a 960-residue protein sequence, read N- to C-terminus: RNA polymerase II subunit A C-terminal domain phosphatase (960 aa).

Position 1 is an N-acetylmethionine (M1). One can recognise an FCP1 homology domain in the interval 178-341; that stretch reads HRNRKLVLMV…PPAARETQAR (164 aa). Residues 331–580 form a disordered region; sequence APPAARETQA…EEDTDDDDHL (250 aa). The span at 439–448 shows a compositional bias: polar residues; the sequence is PGVQPTQGDA. Residues 453-463 are compositionally biased toward acidic residues; it reads LDFDLSSDSES. S530 bears the Phosphoserine mark. A compositionally biased stretch (polar residues) spans 547–556; that stretch reads ESQNSEQSGV. The span at 566-578 shows a compositional bias: acidic residues; that stretch reads VGEEEEEDTDDDD. One can recognise a BRCT domain in the interval 619 to 718; that stretch reads LKSKVLADVA…DKVEEQLFPL (100 aa). Residues S664 and S730 each carry the phosphoserine modification. N6-acetyllysine is present on K770. 2 disordered regions span residues 770 to 834 and 854 to 948; these read KLIR…MSEA and DILG…ADEM. Residues S830, S860, and S863 each carry the phosphoserine modification. Residues 854–864 show a composition bias toward acidic residues; the sequence is DILGEGSDDSD. Basic and acidic residues predominate over residues 865–881; it reads IEKKKPEDQDNEQERAP. Residues 934–947 are compositionally biased toward acidic residues; the sequence is SNDDEEGSSSEADE.

As to quaternary structure, homodimer. Interacts with GTF2F1. Interacts with WDR77, SNRPB and SNRNP70. In terms of processing, phosphorylated. In the presence of TFIIF, the phosphorylated form has an increased CTD phosphatase activity. The phosphorylation is required for the physical interaction with GTF2F1.

It localises to the nucleus. The protein resides in the cytoplasm. Its subcellular location is the cytoskeleton. The protein localises to the microtubule organizing center. It is found in the centrosome. It localises to the spindle. The protein resides in the spindle pole. Its subcellular location is the midbody. It catalyses the reaction O-phospho-L-seryl-[protein] + H2O = L-seryl-[protein] + phosphate. It carries out the reaction O-phospho-L-threonyl-[protein] + H2O = L-threonyl-[protein] + phosphate. In terms of biological role, processively dephosphorylates 'Ser-2' and 'Ser-5' of the heptad repeats YSPTSPS in the C-terminal domain of the largest RNA polymerase II subunit. This promotes the activity of RNA polymerase II. Plays a role in the exit from mitosis by dephosphorylating crucial mitotic substrates (USP44, CDC20 and WEE1) that are required for M-phase-promoting factor (MPF)/CDK1 inactivation. The polypeptide is RNA polymerase II subunit A C-terminal domain phosphatase (Ctdp1) (Mus musculus (Mouse)).